Reading from the N-terminus, the 266-residue chain is Tryptophan synthase alpha chain (266 aa).

Active-site proton acceptor residues include E47 and D58.

It belongs to the TrpA family. Tetramer of two alpha and two beta chains.

It catalyses the reaction (1S,2R)-1-C-(indol-3-yl)glycerol 3-phosphate + L-serine = D-glyceraldehyde 3-phosphate + L-tryptophan + H2O. The protein operates within amino-acid biosynthesis; L-tryptophan biosynthesis; L-tryptophan from chorismate: step 5/5. Functionally, the alpha subunit is responsible for the aldol cleavage of indoleglycerol phosphate to indole and glyceraldehyde 3-phosphate. The chain is Tryptophan synthase alpha chain from Leptospira biflexa serovar Patoc (strain Patoc 1 / Ames).